Reading from the N-terminus, the 330-residue chain is MTTKSYILGFGSHAPERILTNTDMEAFVDTTDEWITTRTGIKQRHIAAEGETTSDLGAKAALQALANAGLHADALTHILVATCTPDAMCPSTACLIEHKLGVSGLMALDLNAACSGFLYALNMAQGIVALTPDAKVLVVAAEVLSRRINWNDRSTCVLFGDGAGAVIVGSHPNEGRAVEVADSLLSSDGALGDLLLISGGGTSVPYKHGQPVGDEFFVRMEGREIFKHAVRSMARVCEELLERNGIAREDVDMLLPHQANLRIIEAVGKKLGIPADKVFVNLQEYGNTSAASVPLALADADSKNLLPPGRTVLLTTFGGGFTWGAVLLRT.

Active-site residues include cysteine 114 and histidine 257. Residues glutamine 258–arginine 262 are ACP-binding. Residue asparagine 287 is part of the active site.

Belongs to the thiolase-like superfamily. FabH family. In terms of assembly, homodimer.

The protein localises to the cytoplasm. The enzyme catalyses malonyl-[ACP] + acetyl-CoA + H(+) = 3-oxobutanoyl-[ACP] + CO2 + CoA. It functions in the pathway lipid metabolism; fatty acid biosynthesis. Its function is as follows. Catalyzes the condensation reaction of fatty acid synthesis by the addition to an acyl acceptor of two carbons from malonyl-ACP. Catalyzes the first condensation reaction which initiates fatty acid synthesis and may therefore play a role in governing the total rate of fatty acid production. Possesses both acetoacetyl-ACP synthase and acetyl transacylase activities. Its substrate specificity determines the biosynthesis of branched-chain and/or straight-chain of fatty acids. The sequence is that of Beta-ketoacyl-[acyl-carrier-protein] synthase III from Oleidesulfovibrio alaskensis (strain ATCC BAA-1058 / DSM 17464 / G20) (Desulfovibrio alaskensis).